Reading from the N-terminus, the 99-residue chain is DNA-binding protein Fis (99 aa).

The segment at residues 75 to 94 (QTRAANMLGINRGTLRKKLK) is a DNA-binding region (H-T-H motif).

The protein belongs to the transcriptional regulatory Fis family. As to quaternary structure, homodimer.

In terms of biological role, activates ribosomal RNA transcription. Plays a direct role in upstream activation of rRNA promoters. The protein is DNA-binding protein Fis of Haemophilus influenzae (strain 86-028NP).